Here is a 176-residue protein sequence, read N- to C-terminus: Large ribosomal subunit protein uL6 (176 aa).

It belongs to the universal ribosomal protein uL6 family. Part of the 50S ribosomal subunit.

This protein binds to the 23S rRNA, and is important in its secondary structure. It is located near the subunit interface in the base of the L7/L12 stalk, and near the tRNA binding site of the peptidyltransferase center. The chain is Large ribosomal subunit protein uL6 from Lacticaseibacillus paracasei (strain ATCC 334 / BCRC 17002 / CCUG 31169 / CIP 107868 / KCTC 3260 / NRRL B-441) (Lactobacillus paracasei).